The sequence spans 550 residues: 4-coumarate--CoA ligase-like 8 (550 aa).

Residues Ser-207, Ser-208, Gly-209, Thr-210, Thr-211, and Lys-215 each contribute to the ATP site. Phe-253 lines the (E)-4-coumaroyl-AMP pocket. CoA is bound at residue Arg-274. Residues 276-347 (DLGEMMAAVE…KKYPTVDVYQ (72 aa)) form an SBD1 region. Positions 325, 347, 348, and 352 each coordinate (E)-4-coumaroyl-AMP. The ATP site is built by Gln-347, Gly-348, Thr-352, Asp-430, and Arg-445. Residues 348-412 (GYALTESNGA…LKGPSIAKGY (65 aa)) are SBD2. Lys-447 and Lys-451 together coordinate (E)-4-coumaroyl-AMP. Positions 453 and 454 each coordinate CoA. An ATP-binding site is contributed by Lys-536. The Microbody targeting signal motif lies at 548–550 (SKI).

It belongs to the ATP-dependent AMP-binding enzyme family. The cofactor is Mg(2+).

Its subcellular location is the peroxisome. The catalysed reaction is (E)-4-coumarate + ATP + CoA = (E)-4-coumaroyl-CoA + AMP + diphosphate. It catalyses the reaction (E)-4-coumarate + ATP + H(+) = (E)-4-coumaroyl-AMP + diphosphate. The enzyme catalyses (E)-4-coumaroyl-AMP + CoA = (E)-4-coumaroyl-CoA + AMP + H(+). Functionally, carboxylate--CoA ligase that may use 4-coumarate as substrate. Follows a two-step reaction mechanism, wherein the carboxylate substrate first undergoes adenylation by ATP, followed by a thioesterification in the presence of CoA to yield the final CoA thioester. This chain is 4-coumarate--CoA ligase-like 8, found in Arabidopsis thaliana (Mouse-ear cress).